We begin with the raw amino-acid sequence, 247 residues long: UPF0246 protein LAF_1150 (247 aa).

The protein belongs to the UPF0246 family.

In Limosilactobacillus fermentum (strain NBRC 3956 / LMG 18251) (Lactobacillus fermentum), this protein is UPF0246 protein LAF_1150.